The following is a 621-amino-acid chain: Chaperone protein HscA homolog (621 aa).

The protein belongs to the heat shock protein 70 family.

Its function is as follows. Chaperone involved in the maturation of iron-sulfur cluster-containing proteins. Has a low intrinsic ATPase activity which is markedly stimulated by HscB. The protein is Chaperone protein HscA homolog of Polynucleobacter necessarius subsp. necessarius (strain STIR1).